We begin with the raw amino-acid sequence, 125 residues long: Snaclec VP12 subunit B (125 aa).

Cystine bridges form between cysteine 4–cysteine 15, cysteine 32–cysteine 121, and cysteine 98–cysteine 113. One can recognise a C-type lectin domain in the interval phenylalanine 11–lysine 122.

This sequence belongs to the snaclec family. Heterodimer of subunits alpha and beta; disulfide-linked. As to expression, expressed by the venom gland.

Its subcellular location is the secreted. Its function is as follows. Inhibits integrin alpha-2/beta-1- (ITGA2/ITGB1) dependent melanoma metastasis. This Daboia palaestinae (Palestine viper) protein is Snaclec VP12 subunit B.